Consider the following 198-residue polypeptide: Probable chorismate pyruvate-lyase (198 aa).

Substrate-binding residues include Arg-73, Leu-111, and Glu-172.

This sequence belongs to the UbiC family.

The protein resides in the cytoplasm. The enzyme catalyses chorismate = 4-hydroxybenzoate + pyruvate. It functions in the pathway cofactor biosynthesis; ubiquinone biosynthesis. In terms of biological role, removes the pyruvyl group from chorismate, with concomitant aromatization of the ring, to provide 4-hydroxybenzoate (4HB) for the ubiquinone pathway. In Burkholderia orbicola (strain AU 1054), this protein is Probable chorismate pyruvate-lyase.